Reading from the N-terminus, the 110-residue chain is UPF0060 membrane protein Mfla_2554 (110 aa).

The next 4 membrane-spanning stretches (helical) occupy residues 7 to 27 (VALF…PYLW), 33 to 53 (SPLL…LLTL), 61 to 81 (VYAA…WVVD), and 83 to 103 (IIPS…MAII).

Belongs to the UPF0060 family.

Its subcellular location is the cell inner membrane. The chain is UPF0060 membrane protein Mfla_2554 from Methylobacillus flagellatus (strain ATCC 51484 / DSM 6875 / VKM B-1610 / KT).